The primary structure comprises 180 residues: Translation machinery-associated protein 16 homolog (180 aa).

Residues 1–12 show a composition bias toward basic and acidic residues; it reads MTNLRKELEKCK. The segment at 1–32 is disordered; sequence MTNLRKELEKCKHPNSRKTKALGKKARRQNNK. The span at 13–32 shows a compositional bias: basic residues; it reads HPNSRKTKALGKKARRQNNK.

Belongs to the TMA16 family.

The chain is Translation machinery-associated protein 16 homolog from Drosophila melanogaster (Fruit fly).